The chain runs to 166 residues: Phosphopantetheine adenylyltransferase (166 aa).

Ser-10 is a substrate binding site. ATP contacts are provided by residues 10–11 and His-18; that span reads SF. Positions 42, 79, and 93 each coordinate substrate. Residues 94–96, Glu-104, and 129–135 each bind ATP; these read GLR and VRPITAT.

This sequence belongs to the bacterial CoaD family. In terms of assembly, homohexamer. Mg(2+) serves as cofactor.

It localises to the cytoplasm. It carries out the reaction (R)-4'-phosphopantetheine + ATP + H(+) = 3'-dephospho-CoA + diphosphate. It functions in the pathway cofactor biosynthesis; coenzyme A biosynthesis; CoA from (R)-pantothenate: step 4/5. In terms of biological role, reversibly transfers an adenylyl group from ATP to 4'-phosphopantetheine, yielding dephospho-CoA (dPCoA) and pyrophosphate. This chain is Phosphopantetheine adenylyltransferase, found in Methylobacterium nodulans (strain LMG 21967 / CNCM I-2342 / ORS 2060).